The following is a 300-amino-acid chain: MARVRQEALSSLLSARDVRDLADRLSIRPTKTLGQNFVVDANTVRRIVRVADLTPEDVVVEVGPGLGSLTLALLEAVDRVVAVEIDPVLAAELPATVAARGRPGTSFEVVLADAVQLAELPGPPPTALVANLPYNVAVPVLLTMLARFPSLRQGLVMVQSEVADRLVAPPGSRTYGVPSVKTAWYASAKRAGSVPPPVFWPVPRVDSGLVSFTRRPAPETTAGREEVFALVDAAFAQRRKTLRAALAGWAGSPAAAEEALRAAGVDPSVRGEQLGVADFARIAAHRPGGARAAGEPAGTP.

Residues Asn36, Val38, Gly63, Glu84, Asp113, and Asn131 each contribute to the S-adenosyl-L-methionine site.

This sequence belongs to the class I-like SAM-binding methyltransferase superfamily. rRNA adenine N(6)-methyltransferase family. RsmA subfamily.

Its subcellular location is the cytoplasm. It catalyses the reaction adenosine(1518)/adenosine(1519) in 16S rRNA + 4 S-adenosyl-L-methionine = N(6)-dimethyladenosine(1518)/N(6)-dimethyladenosine(1519) in 16S rRNA + 4 S-adenosyl-L-homocysteine + 4 H(+). Specifically dimethylates two adjacent adenosines (A1518 and A1519) in the loop of a conserved hairpin near the 3'-end of 16S rRNA in the 30S particle. May play a critical role in biogenesis of 30S subunits. The polypeptide is Ribosomal RNA small subunit methyltransferase A (Kineococcus radiotolerans (strain ATCC BAA-149 / DSM 14245 / SRS30216)).